A 302-amino-acid chain; its full sequence is Transcription factor bHLH7 (302 aa).

Residues 124–154 (QPMSQPAPPMPHQQSTIRPRVRARRGQATDP) form a disordered region. In terms of domain architecture, bHLH spans 150–199 (QATDPHSIAERLRRERIAERIRSLQELVPTVNKTDRAAMIDEIVDYVKFL).

As to quaternary structure, homodimer. As to expression, expressed constitutively in roots, leaves, stems and flowers.

It localises to the nucleus. The protein is Transcription factor bHLH7 (BHLH7) of Arabidopsis thaliana (Mouse-ear cress).